The primary structure comprises 227 residues: Uracil phosphoribosyltransferase (227 aa).

Lysine 36 to lysine 40 is a binding site for GTP. Residues arginine 86, arginine 111, and aspartate 145 to threonine 153 each bind 5-phospho-alpha-D-ribose 1-diphosphate. Uracil is bound by residues isoleucine 212 and glycine 217 to alanine 219. Aspartate 218 provides a ligand contact to 5-phospho-alpha-D-ribose 1-diphosphate.

This sequence belongs to the UPRTase family. Mg(2+) serves as cofactor.

It catalyses the reaction UMP + diphosphate = 5-phospho-alpha-D-ribose 1-diphosphate + uracil. Its pathway is pyrimidine metabolism; UMP biosynthesis via salvage pathway; UMP from uracil: step 1/1. With respect to regulation, allosterically activated by GTP. Catalyzes the conversion of uracil and 5-phospho-alpha-D-ribose 1-diphosphate (PRPP) to UMP and diphosphate. In Halobacterium salinarum (strain ATCC 700922 / JCM 11081 / NRC-1) (Halobacterium halobium), this protein is Uracil phosphoribosyltransferase.